The sequence spans 192 residues: Cell division protein SepF (192 aa).

Positions 154 to 192 (QEEPAPSNVTTTTQQSEETISESVTAPEPAWGTPVASAI) are disordered. Over residues 162–178 (VTTTTQQSEETISESVT) the composition is skewed to low complexity.

It belongs to the SepF family. Homodimer. Interacts with FtsZ.

Its subcellular location is the cytoplasm. Functionally, cell division protein that is part of the divisome complex and is recruited early to the Z-ring. Probably stimulates Z-ring formation, perhaps through the cross-linking of FtsZ protofilaments. Its function overlaps with FtsA. This Prochlorococcus marinus (strain MIT 9211) protein is Cell division protein SepF.